A 125-amino-acid chain; its full sequence is Small ribosomal subunit protein eS8 (125 aa).

Residues methionine 1–arginine 30 are disordered.

Belongs to the eukaryotic ribosomal protein eS8 family. As to quaternary structure, part of the 30S ribosomal subunit.

This Picrophilus torridus (strain ATCC 700027 / DSM 9790 / JCM 10055 / NBRC 100828 / KAW 2/3) protein is Small ribosomal subunit protein eS8.